The following is a 355-amino-acid chain: Spore germination protein XB (355 aa).

Transmembrane regions (helical) follow at residues 2-24 (VNFF…VIII), 34-56 (DSWI…VFIV), 69-91 (LMRN…YLII), 106-128 (FYLP…FYNI), 135-157 (IALT…MIAN), 180-197 (GMIY…ILFL), 210-232 (LIIV…IVEF), 265-287 (VYQW…PDVL), 299-321 (ISIL…SFYW), and 326-348 (VFLP…FVWV).

This sequence belongs to the amino acid-polyamine-organocation (APC) superfamily. Spore germination protein (SGP) (TC 2.A.3.9) family.

It is found in the cell membrane. Its function is as follows. May allow B.anthracis to germinate within phagocytic cells and therefore involved in virulence. In Bacillus anthracis, this protein is Spore germination protein XB (gerXB).